The sequence spans 103 residues: Pyrimidine/purine nucleoside phosphorylase (103 aa).

Belongs to the nucleoside phosphorylase PpnP family.

The catalysed reaction is a purine D-ribonucleoside + phosphate = a purine nucleobase + alpha-D-ribose 1-phosphate. It carries out the reaction adenosine + phosphate = alpha-D-ribose 1-phosphate + adenine. It catalyses the reaction cytidine + phosphate = cytosine + alpha-D-ribose 1-phosphate. The enzyme catalyses guanosine + phosphate = alpha-D-ribose 1-phosphate + guanine. The catalysed reaction is inosine + phosphate = alpha-D-ribose 1-phosphate + hypoxanthine. It carries out the reaction thymidine + phosphate = 2-deoxy-alpha-D-ribose 1-phosphate + thymine. It catalyses the reaction uridine + phosphate = alpha-D-ribose 1-phosphate + uracil. The enzyme catalyses xanthosine + phosphate = alpha-D-ribose 1-phosphate + xanthine. In terms of biological role, catalyzes the phosphorolysis of diverse nucleosides, yielding D-ribose 1-phosphate and the respective free bases. Can use uridine, adenosine, guanosine, cytidine, thymidine, inosine and xanthosine as substrates. Also catalyzes the reverse reactions. The sequence is that of Pyrimidine/purine nucleoside phosphorylase from Shewanella putrefaciens (strain CN-32 / ATCC BAA-453).